Here is a 436-residue protein sequence, read N- to C-terminus: Serine hydroxymethyltransferase (436 aa).

(6S)-5,6,7,8-tetrahydrofolate-binding positions include leucine 120 and 124-126 (GHL). Lysine 229 bears the N6-(pyridoxal phosphate)lysine mark.

This sequence belongs to the SHMT family. In terms of assembly, homodimer. Requires pyridoxal 5'-phosphate as cofactor.

It localises to the cytoplasm. The catalysed reaction is (6R)-5,10-methylene-5,6,7,8-tetrahydrofolate + glycine + H2O = (6S)-5,6,7,8-tetrahydrofolate + L-serine. It functions in the pathway one-carbon metabolism; tetrahydrofolate interconversion. Its pathway is amino-acid biosynthesis; glycine biosynthesis; glycine from L-serine: step 1/1. Catalyzes the reversible interconversion of serine and glycine with tetrahydrofolate (THF) serving as the one-carbon carrier. This reaction serves as the major source of one-carbon groups required for the biosynthesis of purines, thymidylate, methionine, and other important biomolecules. Also exhibits THF-independent aldolase activity toward beta-hydroxyamino acids, producing glycine and aldehydes, via a retro-aldol mechanism. This Roseiflexus castenholzii (strain DSM 13941 / HLO8) protein is Serine hydroxymethyltransferase.